The sequence spans 542 residues: CTP synthase (542 aa).

Residues 1-269 (MQTKYIFITG…DALICELLHL (269 aa)) form an amidoligase domain region. Ser-14 contacts CTP. Ser-14 contributes to the UTP binding site. ATP contacts are provided by residues 15–20 (SLGKGL) and Asp-72. Mg(2+)-binding residues include Asp-72 and Glu-143. Residues 150-152 (DIE), 189-194 (KTKPSQ), and Lys-225 each bind CTP. UTP is bound by residues 189–194 (KTKPSQ) and Lys-225. 241–243 (KDV) is an ATP binding site. In terms of domain architecture, Glutamine amidotransferase type-1 spans 301-538 (YVQHQDAYKS…IQAMIIYHKS (238 aa)). Gly-358 contacts L-glutamine. Cys-385 functions as the Nucleophile; for glutamine hydrolysis in the catalytic mechanism. L-glutamine is bound by residues 386–389 (LGMQ), Glu-409, and Arg-466. Catalysis depends on residues His-511 and Glu-513.

The protein belongs to the CTP synthase family. In terms of assembly, homotetramer.

The catalysed reaction is UTP + L-glutamine + ATP + H2O = CTP + L-glutamate + ADP + phosphate + 2 H(+). It carries out the reaction L-glutamine + H2O = L-glutamate + NH4(+). It catalyses the reaction UTP + NH4(+) + ATP = CTP + ADP + phosphate + 2 H(+). The protein operates within pyrimidine metabolism; CTP biosynthesis via de novo pathway; CTP from UDP: step 2/2. Its activity is regulated as follows. Allosterically activated by GTP, when glutamine is the substrate; GTP has no effect on the reaction when ammonia is the substrate. The allosteric effector GTP functions by stabilizing the protein conformation that binds the tetrahedral intermediate(s) formed during glutamine hydrolysis. Inhibited by the product CTP, via allosteric rather than competitive inhibition. In terms of biological role, catalyzes the ATP-dependent amination of UTP to CTP with either L-glutamine or ammonia as the source of nitrogen. Regulates intracellular CTP levels through interactions with the four ribonucleotide triphosphates. The sequence is that of CTP synthase from Protochlamydia amoebophila (strain UWE25).